The primary structure comprises 240 residues: Superoxide dismutase [Cu-Zn] (240 aa).

An N-terminal signal peptide occupies residues 1 to 32; it reads MPKPADHRNHAAVSTSVLSALFLGAGAALLSA. Cysteine 33 carries N-palmitoyl cysteine lipidation. A lipid anchor (S-diacylglycerol cysteine) is attached at cysteine 33. Polar residues-rich tracts occupy residues 36–51 and 68–77; these read PQHA…SIWT and GAQSLTSTLT. The segment at 36 to 77 is disordered; it reads PQHASTVPGTTPSIWTGSPAPSGLSGHDEESPGAQSLTSTLT. 2 residues coordinate Cu cation: histidine 116 and histidine 118. Cysteine 123 and cysteine 234 form a disulfide bridge. 2 residues coordinate Zn(2+): histidine 146 and aspartate 158. Histidine 195 contributes to the Cu cation binding site.

It belongs to the Cu-Zn superoxide dismutase family. It depends on Cu cation as a cofactor. The cofactor is Zn(2+).

Its subcellular location is the cell membrane. The catalysed reaction is 2 superoxide + 2 H(+) = H2O2 + O2. With respect to regulation, inhibited by the copper chelator diethyl dithiocarbamate. In terms of biological role, destroys radicals which are normally produced within the cells and which are toxic to biological systems. May play a role in favoring mycobacterial survival in phagocytes. The protein is Superoxide dismutase [Cu-Zn] (sodC) of Mycobacterium bovis (strain ATCC BAA-935 / AF2122/97).